Here is an 891-residue protein sequence, read N- to C-terminus: DNA mismatch repair protein MutS (891 aa).

Residue 617 to 624 (GPNMSGKS) participates in ATP binding. Residues 805–827 (REKIEEEEPKTKDTKRGPSEKVK) show a composition bias toward basic and acidic residues. Positions 805 to 840 (REKIEEEEPKTKDTKRGPSEKVKNASPTLPRDEKGR) are disordered.

This sequence belongs to the DNA mismatch repair MutS family.

In terms of biological role, this protein is involved in the repair of mismatches in DNA. It is possible that it carries out the mismatch recognition step. This protein has a weak ATPase activity. In Porphyromonas gingivalis (strain ATCC BAA-308 / W83), this protein is DNA mismatch repair protein MutS.